The following is a 432-amino-acid chain: Adenylosuccinate synthetase (432 aa).

GTP is bound by residues 12–18 and 40–42; these read GDEGKGK and GHT. The active-site Proton acceptor is the Asp13. Mg(2+) contacts are provided by Asp13 and Gly40. IMP-binding positions include 13–16, 38–41, Thr128, Arg142, Gln223, Thr238, and Arg302; these read DEGK and NAGH. The active-site Proton donor is His41. 298-304 is a binding site for substrate; that stretch reads TVTGRPR. Residues Arg304, 330–332, and 412–414 each bind GTP; these read LLD and SVG.

Belongs to the adenylosuccinate synthetase family. In terms of assembly, homodimer. It depends on Mg(2+) as a cofactor.

Its subcellular location is the cytoplasm. The catalysed reaction is IMP + L-aspartate + GTP = N(6)-(1,2-dicarboxyethyl)-AMP + GDP + phosphate + 2 H(+). It functions in the pathway purine metabolism; AMP biosynthesis via de novo pathway; AMP from IMP: step 1/2. In terms of biological role, plays an important role in the de novo pathway of purine nucleotide biosynthesis. Catalyzes the first committed step in the biosynthesis of AMP from IMP. This chain is Adenylosuccinate synthetase, found in Limosilactobacillus reuteri (strain DSM 20016) (Lactobacillus reuteri).